A 1262-amino-acid polypeptide reads, in one-letter code: Clustered mitochondria protein homolog (1262 aa).

The interval 1–47 (MTSGSELKAEVDAPVVNGKDELVHEEDNNDSGHSSINTPDASEDKQT) is disordered. A compositionally biased stretch (polar residues) spans 31–40 (SGHSSINTPD). Positions 335 to 580 (AIELIEPFRV…RSMPPDVHYL (246 aa)) constitute a Clu domain.

It belongs to the CLU family.

It localises to the cytoplasm. Its function is as follows. mRNA-binding protein involved in proper cytoplasmic distribution of mitochondria. The polypeptide is Clustered mitochondria protein homolog (Caenorhabditis briggsae).